The chain runs to 346 residues: Haptoglobin-related protein (346 aa).

A signal peptide (not cleaved) is located at residues 1-16; that stretch reads DLGAVIYLLLWGRQLF. One can recognise a Sushi domain in the interval 32–85; it reads FPKPPEIANGYVEHLFRYQRKNYYRLRTEGDGVYTLNDKKQWINKAVGDKLPEC. The region spanning 102-344 is the Peptidase S1 domain; that stretch reads ILGGHLDAKG…IHVWVQKTIA (243 aa). Disulfide bonds link Cys249-Cys280 and Cys291-Cys321.

The protein belongs to the peptidase S1 family.

It localises to the secreted. In terms of biological role, primate-specific plasma protein associated with apolipoprotein L-I (apoL-I)-containing high-density lipoprotein (HDL). Binds hemoglobin with high affinity and may contribute to the clearance of cell-free hemoglobin to allow hepatic recycling of heme iron. This chain is Haptoglobin-related protein (HPR), found in Pan troglodytes (Chimpanzee).